The chain runs to 382 residues: uncharacterized protein (382 aa).

A run of 12 helical transmembrane segments spans residues 14-34, 45-65, 79-99, 102-122, 131-151, 157-177, 204-224, 235-255, 270-290, 291-311, 325-345, and 348-368; these read GLLL…LWLA, VVSS…GYVI, FIFA…SWLA, FVAG…LMCS, LLAA…LLVS, LMSV…PLLF, LGVN…GLMP, ASIG…QWPI, VQVF…AMAP, ALFI…AWAC, ALLL…AMLM, and FSDN…LLML.

This sequence belongs to the major facilitator superfamily. YcaD (TC 2.A.1.26) family.

It localises to the cell inner membrane. This is an uncharacterized protein from Shigella sonnei (strain Ss046).